Consider the following 80-residue polypeptide: Metallothionein-like protein type 2, MT2-4/MT2-25 (80 aa).

Belongs to the metallothionein superfamily. Type 15 family.

Metallothioneins have a high content of cysteine residues that bind various heavy metals. This Brassica juncea (Indian mustard) protein is Metallothionein-like protein type 2, MT2-4/MT2-25.